The chain runs to 386 residues: Bifunctional enzyme IspD/IspF (386 aa).

The segment at 1-230 is 2-C-methyl-D-erythritol 4-phosphate cytidylyltransferase; it reads MIRDERVAAI…RARSILEAPV (230 aa). The 2-C-methyl-D-erythritol 2,4-cyclodiphosphate synthase stretch occupies residues 231-386; that stretch reads AMGVGYDTHR…HAVALLVRVR (156 aa). Residues Asp-237 and His-239 each coordinate a divalent metal cation. 4-CDP-2-C-methyl-D-erythritol 2-phosphate is bound by residues 237–239 and 262–263; these read DTH and HS. His-270 contributes to the a divalent metal cation binding site. 4-CDP-2-C-methyl-D-erythritol 2-phosphate-binding positions include 284–286, 289–293, 360–363, Phe-367, and Arg-370; these read DLG, FPDTD, and TTGE.

This sequence in the N-terminal section; belongs to the IspD/TarI cytidylyltransferase family. IspD subfamily. It in the C-terminal section; belongs to the IspF family. A divalent metal cation serves as cofactor.

It carries out the reaction 2-C-methyl-D-erythritol 4-phosphate + CTP + H(+) = 4-CDP-2-C-methyl-D-erythritol + diphosphate. The enzyme catalyses 4-CDP-2-C-methyl-D-erythritol 2-phosphate = 2-C-methyl-D-erythritol 2,4-cyclic diphosphate + CMP. It participates in isoprenoid biosynthesis; isopentenyl diphosphate biosynthesis via DXP pathway; isopentenyl diphosphate from 1-deoxy-D-xylulose 5-phosphate: step 2/6. Its pathway is isoprenoid biosynthesis; isopentenyl diphosphate biosynthesis via DXP pathway; isopentenyl diphosphate from 1-deoxy-D-xylulose 5-phosphate: step 4/6. In terms of biological role, bifunctional enzyme that catalyzes the formation of 4-diphosphocytidyl-2-C-methyl-D-erythritol from CTP and 2-C-methyl-D-erythritol 4-phosphate (MEP) (IspD), and catalyzes the conversion of 4-diphosphocytidyl-2-C-methyl-D-erythritol 2-phosphate (CDP-ME2P) to 2-C-methyl-D-erythritol 2,4-cyclodiphosphate (ME-CPP) with a corresponding release of cytidine 5-monophosphate (CMP) (IspF). In Anaeromyxobacter sp. (strain Fw109-5), this protein is Bifunctional enzyme IspD/IspF.